Reading from the N-terminus, the 181-residue chain is Large ribosomal subunit protein uL5 (181 aa).

The protein belongs to the universal ribosomal protein uL5 family. In terms of assembly, part of the 50S ribosomal subunit; contacts the 5S rRNA and probably tRNA. Forms a bridge to the 30S subunit in the 70S ribosome.

In terms of biological role, this is one of the proteins that bind and probably mediate the attachment of the 5S RNA into the large ribosomal subunit, where it forms part of the central protuberance. In the 70S ribosome it contacts protein S13 of the 30S subunit (bridge B1b), connecting the 2 subunits; this bridge is implicated in subunit movement. May contact the P site tRNA; the 5S rRNA and some of its associated proteins might help stabilize positioning of ribosome-bound tRNAs. The protein is Large ribosomal subunit protein uL5 of Methanococcus maripaludis (strain C5 / ATCC BAA-1333).